Here is a 258-residue protein sequence, read N- to C-terminus: Putative cysteine-rich repeat secretory protein 35 (258 aa).

The signal sequence occupies residues 1 to 29 (MYSSYSLSKRLIYVPILAIQFLLVRSVSS). Gnk2-homologous domains follow at residues 36 to 138 (YLNH…TIKP) and 146 to 255 (FKNT…LYPF).

It belongs to the cysteine-rich repeat secretory protein family.

Its subcellular location is the secreted. The polypeptide is Putative cysteine-rich repeat secretory protein 35 (CRRSP35) (Arabidopsis thaliana (Mouse-ear cress)).